Reading from the N-terminus, the 337-residue chain is Large ribosomal subunit protein uL3 (337 aa).

The disordered stretch occupies residues 1 to 29; that stretch reads MARHHQPRKGSVAFSPRKRAARETPRVKS.

The protein belongs to the universal ribosomal protein uL3 family. Part of the 50S ribosomal subunit. Forms a cluster with proteins L14 and L24e.

Its function is as follows. One of the primary rRNA binding proteins, it binds directly near the 3'-end of the 23S rRNA, where it nucleates assembly of the 50S subunit. This Methanothermobacter thermautotrophicus (strain ATCC 29096 / DSM 1053 / JCM 10044 / NBRC 100330 / Delta H) (Methanobacterium thermoautotrophicum) protein is Large ribosomal subunit protein uL3.